A 276-amino-acid chain; its full sequence is Microtubule-associated protein RP/EB family member 1A (276 aa).

The region spanning phenylalanine 13 to aspartate 115 is the Calponin-homology (CH) domain. A disordered region spans residues glutamate 124–glycine 172. Residues valine 129–valine 141 show a composition bias toward basic and acidic residues. Low complexity predominate over residues serine 162–glycine 172. The region spanning proline 173 to alanine 243 is the EB1 C-terminal domain. Residues asparagine 252–alanine 276 form a disordered region. The span at valine 257–glutamate 270 shows a compositional bias: acidic residues.

This sequence belongs to the MAPRE family. As to quaternary structure, homodimer and heterodimer with EB1B. Interacts with tobamovirus movement protein. In terms of tissue distribution, highly expressed in guard cells of leaf stomata, pollen grains and pollen tubes. Expressed in young roots.

The protein resides in the cytoplasm. Its subcellular location is the cytoskeleton. It localises to the spindle pole. It is found in the phragmoplast. Binds to the plus end of microtubules and regulates the dynamics of the microtubule cytoskeleton. May be involved in anchoring microtubules to their nucleation sites and/or functioning as a reservoir for distribution to the growing end. In plants, microtubule minus ends are not necessarily severed from the nucleation site and transported to the plus end of a microtubule as part of the recycling process. May play a role in endomembrane organization during polarized growth of plant cells. Interacts with the tobamovirus movement protein (MP) and may play a role in the association of MP with the microtubule system during infection. This is Microtubule-associated protein RP/EB family member 1A (EB1A) from Arabidopsis thaliana (Mouse-ear cress).